The chain runs to 413 residues: Probable inactive allantoicase (413 aa).

It belongs to the allantoicase family.

Functionally, the function of this enzyme is unclear as allantoicase activity is not known to exist in mammals. The sequence is that of Probable inactive allantoicase from Rattus norvegicus (Rat).